Consider the following 307-residue polypeptide: UPF0276 protein HI_1600 (307 aa).

Belongs to the UPF0276 family.

The protein is UPF0276 protein HI_1600 of Haemophilus influenzae (strain ATCC 51907 / DSM 11121 / KW20 / Rd).